Here is a 239-residue protein sequence, read N- to C-terminus: MAATLLAARGAGPAPAWGPEAFTPDWESREVSTGTTIMAVQFDGGVVLGADSRTTTGSYIANRVTDKLTPIHDRIFCCRSGSAADTQAVADAVTYQLGFHSIELNEPPLVHTAASLFKEMCYRYREDLMAGIIIAGWDPQEGGQVYSVPMGGMMVRQSFAIGGSGSSYIYGYVDATYREGMTKEECLQFTANALALAMERDGSSGGVIRLAAIAESGVERQVLLGDQIPKFAVATLPPA.

A2 is subject to N-acetylalanine. A propeptide spans 2–34 (removed in mature form); it reads AATLLAARGAGPAPAWGPEAFTPDWESREVSTG. T35 acts as the Nucleophile in catalysis. T69 is subject to Phosphothreonine.

Belongs to the peptidase T1B family. In terms of assembly, the 26S proteasome consists of a 20S proteasome core and two 19S regulatory subunits. The 20S proteasome core is a barrel-shaped complex made of 28 subunits that are arranged in four stacked rings. The two outer rings are each formed by seven alpha subunits, and the two inner rings are formed by seven beta subunits. The proteolytic activity is exerted by three beta-subunits PSMB5, PSMB6 and PSMB7. As to quaternary structure, (Microbial infection) Interacts with HIV-1 protein Tat.

Its subcellular location is the cytoplasm. It localises to the nucleus. It catalyses the reaction Cleavage of peptide bonds with very broad specificity.. Component of the 20S core proteasome complex involved in the proteolytic degradation of most intracellular proteins. This complex plays numerous essential roles within the cell by associating with different regulatory particles. Associated with two 19S regulatory particles, forms the 26S proteasome and thus participates in the ATP-dependent degradation of ubiquitinated proteins. The 26S proteasome plays a key role in the maintenance of protein homeostasis by removing misfolded or damaged proteins that could impair cellular functions, and by removing proteins whose functions are no longer required. Associated with the PA200 or PA28, the 20S proteasome mediates ubiquitin-independent protein degradation. This type of proteolysis is required in several pathways including spermatogenesis (20S-PA200 complex) or generation of a subset of MHC class I-presented antigenic peptides (20S-PA28 complex). Within the 20S core complex, PSMB6 displays a peptidylglutamyl-hydrolizing activity also termed postacidic or caspase-like activity, meaning that the peptides bond hydrolysis occurs directly after acidic residues. The sequence is that of Proteasome subunit beta type-6 from Homo sapiens (Human).